The sequence spans 436 residues: tRNA modification GTPase MnmE (436 aa).

Residues arginine 20, glutamate 77, and lysine 117 each coordinate (6S)-5-formyl-5,6,7,8-tetrahydrofolate. Residues 214-360 (GLKIVIAGAP…FIKELESFCL (147 aa)) enclose the TrmE-type G domain. Residues 224–229 (NSGKSS), 243–249 (MEEAGTT), and 268–271 (DTAG) contribute to the GTP site. Residues serine 228 and threonine 249 each contribute to the Mg(2+) site. (6S)-5-formyl-5,6,7,8-tetrahydrofolate is bound at residue lysine 436.

This sequence belongs to the TRAFAC class TrmE-Era-EngA-EngB-Septin-like GTPase superfamily. TrmE GTPase family. As to quaternary structure, homodimer. Heterotetramer of two MnmE and two MnmG subunits. K(+) serves as cofactor.

It is found in the cytoplasm. Its function is as follows. Exhibits a very high intrinsic GTPase hydrolysis rate. Involved in the addition of a carboxymethylaminomethyl (cmnm) group at the wobble position (U34) of certain tRNAs, forming tRNA-cmnm(5)s(2)U34. This is tRNA modification GTPase MnmE from Bartonella quintana (strain Toulouse) (Rochalimaea quintana).